The chain runs to 529 residues: uncharacterized protein (529 aa).

The Arf-GAP domain occupies 13–129; it reads QTAMRKMRAL…LSTLCQEAQR (117 aa). The segment at 28-51 adopts a C4-type zinc-finger fold; sequence CFDCGARNPTWCTVTYGVFLCIDC. A compositionally biased stretch (basic and acidic residues) spans 291–301; sequence QMEAKVAKDPT. Disordered regions lie at residues 291–313, 335–357, 398–424, and 468–493; these read QMEA…GMGG, VLTF…DDKY, KSRY…GASP, and FGSE…SDLK. Low complexity predominate over residues 399–420; sequence SRYTASSSSSSTSRAPTTRLTA. Positions 476 to 487 are enriched in polar residues; the sequence is NGSQQRQSSQVP.

In terms of biological role, GTPase-activating protein for the ADP ribosylation factor family. This is an uncharacterized protein from Caenorhabditis elegans.